Here is a 154-residue protein sequence, read N- to C-terminus: MTPGLLTTAGAGRPRDRCARIVCTVFIETAVVATMFVALLGLSTISSKADDIDWDAIAQCESGGNWAANTGNGLYGGLQISQATWDSNGGVGSPAAASPQQQIEVADNIMKTQGPGAWPKCSSCSQGDAPLGSLTHILTFLAAETGGCSGSRDD.

Residues 21 to 41 (IVCTVFIETAVVATMFVALLG) traverse the membrane as a helical segment.

It belongs to the transglycosylase family. Rpf subfamily.

The protein localises to the cell membrane. Its function is as follows. Factor that stimulates resuscitation of dormant cells. Has peptidoglycan (PG) hydrolytic activity. PG fragments could either directly activate the resuscitation pathway of dormant bacteria or serve as a substrate for endogenous Rpf, resulting in low molecular weight products with resuscitation activity. The sequence is that of Resuscitation-promoting factor RpfD (rpfD) from Mycobacterium tuberculosis (strain CDC 1551 / Oshkosh).